The chain runs to 251 residues: NADH-quinone oxidoreductase subunit C (251 aa).

The segment at 1 to 34 is disordered; the sequence is MSDANNTAGDANEVNPEKDLSAENLPGQRGQGGE.

It belongs to the complex I 30 kDa subunit family. As to quaternary structure, NDH-1 is composed of 14 different subunits. Subunits NuoB, C, D, E, F, and G constitute the peripheral sector of the complex.

The protein resides in the cell membrane. The catalysed reaction is a quinone + NADH + 5 H(+)(in) = a quinol + NAD(+) + 4 H(+)(out). Functionally, NDH-1 shuttles electrons from NADH, via FMN and iron-sulfur (Fe-S) centers, to quinones in the respiratory chain. The immediate electron acceptor for the enzyme in this species is believed to be a menaquinone. Couples the redox reaction to proton translocation (for every two electrons transferred, four hydrogen ions are translocated across the cytoplasmic membrane), and thus conserves the redox energy in a proton gradient. The chain is NADH-quinone oxidoreductase subunit C from Streptomyces coelicolor (strain ATCC BAA-471 / A3(2) / M145).